The sequence spans 413 residues: Putative syntaxin-5 (413 aa).

At 1 to 391 the chain is on the cytoplasmic side; that stretch reads MSDFHNIRSR…RYLQNISKNR (391 aa). Residues 257-290 form a disordered region; sequence KNRRDKFSSGAAVPMGLPSSSSGANVRSKLLQDD. In terms of domain architecture, t-SNARE coiled-coil homology spans 321–383; the sequence is LEYAQARSNT…DMAHSELVRY (63 aa). The helical; Anchor for type IV membrane protein transmembrane segment at 392–412 threads the bilayer; sequence WLMIQVFGVLMVFFVVFVLFL. Residue threonine 413 is a topological domain, extracellular.

This sequence belongs to the syntaxin family.

It localises to the membrane. Functionally, potentially involved in docking of synaptic vesicles at presynaptic active zones. The protein is Putative syntaxin-5 (syx-5) of Caenorhabditis elegans.